Consider the following 711-residue polypeptide: Taperin (711 aa).

Disordered stretches follow at residues 134 to 305 (SRLL…APKP), 328 to 384 (RNSF…LGKS), and 414 to 438 (QRPSSPPPFLPAASEEAEPAEGLRV). The span at 157-180 (PPPPPPPPAPPRPPPAAPSPPAAP) shows a compositional bias: pro residues. Residues 197-206 (LQKTGSNSFT) are compositionally biased toward polar residues. The residue at position 241 (serine 241) is a Phosphoserine. Over residues 267–282 (TPSATPASPPASATPS) the composition is skewed to low complexity. Residues 283-296 (QRQCVSAATSTNDS) show a composition bias toward polar residues. A phosphoserine mark is found at serine 362, serine 418, and serine 463. Disordered regions lie at residues 500 to 535 (TFTVVPKRKPGTLQDQHFSQANREPRPREAEEEEAS), 572 to 630 (SRKK…EKPF), 642 to 662 (SVRPESSRLPEGSSGLSSYTP), and 674 to 711 (QALEQAPREAEPPPVEAMLTPASQNDLSDFRSEPALYF). 2 stretches are compositionally biased toward polar residues: residues 512–521 (LQDQHFSQAN) and 581–590 (NDKSLQTTFE). The segment covering 597–624 (LEQEEEVDQQEEEEEEEEEEEEEEEGSG) has biased composition (acidic residues).

Belongs to the taperin family. As to quaternary structure, interacts with GRXCR2; the interaction restricts TPRN to the stereocilum basal region. Interacts with actin ACTB; the interaction may stabilize stereocilia. Interacts with CLIC5. Interacts with PTPRQ. TPRN, CLIC5 and PTPQR form concentric rings at the base of stereocilia and may form a complex. Interacts with phosphatase PPP1CA; the interaction results in inhibition of PPC1A phosphatase activity. Interacts with DNA damage response proteins XRCC6/KU70, XRCC5/KU80, PARP1, TOP1 and TOP2A; these interactions recruit TPRN to sites of DNA damage where it may play a role in DNA repair. Expression is detected in fetal cochlea.

It is found in the cell projection. The protein resides in the stereocilium. The protein localises to the microvillus. Its subcellular location is the nucleus. It localises to the nucleoplasm. It is found in the cytoplasm. Functionally, essential for hearing. Required for maintenance of stereocilia on both inner and outer hair cells. Necessary for the integrity of the stereociliary rootlet. May act as an actin cytoskeleton regulator involved in the regulation of actin dynamics at the pointed end in hair cells. Forms rings at the base of stereocilia and binds actin filaments in the stereocilia which may stabilize the stereocilia. Acts as a strong inhibitor of PPP1CA phosphatase activity. Recruited to sites of DNA damage and may play a role in DNA damage repair. The chain is Taperin (TPRN) from Homo sapiens (Human).